Here is a 37-residue protein sequence, read N- to C-terminus: Toxin Bcg III 28.78 (37 aa).

Cys6 and Cys31 are disulfide-bonded.

It is found in the secreted. Its subcellular location is the nematocyst. The polypeptide is Toxin Bcg III 28.78 (Bunodosoma cangicum (Sea anemone)).